The primary structure comprises 130 residues: Small ribosomal subunit protein uS8 (130 aa).

Belongs to the universal ribosomal protein uS8 family. As to quaternary structure, part of the 30S ribosomal subunit. Contacts proteins S5 and S12.

Its function is as follows. One of the primary rRNA binding proteins, it binds directly to 16S rRNA central domain where it helps coordinate assembly of the platform of the 30S subunit. This chain is Small ribosomal subunit protein uS8, found in Histophilus somni (strain 129Pt) (Haemophilus somnus).